The sequence spans 881 residues: MTSTNEIRRSFLEYFGSNGHDVVPSAPLVPYNDPTLMFTNAGMVPFKNVFTGLETRAVPRATSSQKCVRAGGKHNDLDNVGYTARHHTFFEMLGNFSFGDYFKEQAITHAWTLLTREWGLPKDKLLATVYHTDDEAFELWKKIAGLPEDRIIRIATKDNFWAMGDDGPCGPCSEIFFDHGDHIWGGPPGSPDEDGDRFIEIWNLVFMQFEQTAGEITGSLPKPSIDTGMGLERIAAVLQGEHDNYDTDTFKALIAASESLTSVRAEGDHKASHRVIADHLRSTSFLLADGVLPSNEGRGYVLRRIMRRAMRHAHLLGAKDPLMHRLVPALVAEMGAAYPELGRAQPLIEETLLREEVQFRRTLSNGIKLLDEATATLGEGDKLPGDTAFKLYDTYGFPYDLTEDALRARGIAVDREGFDAAMAQQKAAARAAWKGSGQAADSEVWFDIAERVGATEFTGYTATTGEAQVVALVKDGKEVDSAMAGDDVAVIVNQTPFYGESGGQTGDAGTITGGDGLVLAVSDTAKPLGRLHAHNAKVQSGSVKVGDVVRLDIDVARRDAIRANHSATHLLHAALRHRLGAHVTQKGSLVAADRLRFDFSHPTALSAEDIAAIEAEVNAEIRANEVVTTRLMSPEDAIEAGAMALFGEKYGDEVRVLSMGRVADKHYSVELCGGTHVRALGDIGVFRIVSESAVSSGVRRIEALTGEGARQWFVAREDALKNTASILRTTPEDVEARVTALMDERKKLERELAEAKKALALGGGSAKAENADEDVNGVKFSGQVLEGLDPKDLRGLLDQAKQRLGSGVAVIVAVNEGKASIAAAVTDDLAGKVSAVDLVRAGVEALGGKGGGGRPDMAQGGGPEGSRAADAIAAARAVLTA.

Residues His565, His569, Cys672, and His676 each contribute to the Zn(2+) site.

This sequence belongs to the class-II aminoacyl-tRNA synthetase family. Zn(2+) serves as cofactor.

The protein localises to the cytoplasm. The catalysed reaction is tRNA(Ala) + L-alanine + ATP = L-alanyl-tRNA(Ala) + AMP + diphosphate. Its function is as follows. Catalyzes the attachment of alanine to tRNA(Ala) in a two-step reaction: alanine is first activated by ATP to form Ala-AMP and then transferred to the acceptor end of tRNA(Ala). Also edits incorrectly charged Ser-tRNA(Ala) and Gly-tRNA(Ala) via its editing domain. This is Alanine--tRNA ligase from Novosphingobium aromaticivorans (strain ATCC 700278 / DSM 12444 / CCUG 56034 / CIP 105152 / NBRC 16084 / F199).